A 511-amino-acid polypeptide reads, in one-letter code: Colicin-B (511 aa).

A TonB box motif is present at residues 17–24 (DTMVVWPS). Transmembrane regions (helical) follow at residues 455–475 (MASA…LIAF) and 477–497 (LSAT…GAFI).

This sequence belongs to the channel forming colicin family.

Its subcellular location is the cell membrane. This colicin is a channel-forming colicin. This class of transmembrane toxins depolarize the cytoplasmic membrane, leading to dissipation of cellular energy. Its function is as follows. Colicins are polypeptide toxins produced by and active against E.coli and closely related bacteria. The protein is Colicin-B (cba) of Escherichia coli.